Consider the following 372-residue polypeptide: Glutamate 5-kinase (372 aa).

Lys-14 contributes to the ATP binding site. Positions 54, 141, and 153 each coordinate substrate. 173 to 174 (TD) provides a ligand contact to ATP. Residues 280–358 (RGTLVLDDGA…DAIEALLGYV (79 aa)) form the PUA domain.

This sequence belongs to the glutamate 5-kinase family.

The protein localises to the cytoplasm. The catalysed reaction is L-glutamate + ATP = L-glutamyl 5-phosphate + ADP. It participates in amino-acid biosynthesis; L-proline biosynthesis; L-glutamate 5-semialdehyde from L-glutamate: step 1/2. Functionally, catalyzes the transfer of a phosphate group to glutamate to form L-glutamate 5-phosphate. The polypeptide is Glutamate 5-kinase (Pseudomonas paraeruginosa (strain DSM 24068 / PA7) (Pseudomonas aeruginosa (strain PA7))).